The following is a 630-amino-acid chain: tRNA uridine 5-carboxymethylaminomethyl modification enzyme MnmG (630 aa).

15 to 20 (GAGHAG) provides a ligand contact to FAD. 276 to 290 (GPRYCPSIEDKIVRF) contacts NAD(+).

This sequence belongs to the MnmG family. As to quaternary structure, homodimer. Heterotetramer of two MnmE and two MnmG subunits. It depends on FAD as a cofactor.

It is found in the cytoplasm. In terms of biological role, NAD-binding protein involved in the addition of a carboxymethylaminomethyl (cmnm) group at the wobble position (U34) of certain tRNAs, forming tRNA-cmnm(5)s(2)U34. In Latilactobacillus sakei subsp. sakei (strain 23K) (Lactobacillus sakei subsp. sakei), this protein is tRNA uridine 5-carboxymethylaminomethyl modification enzyme MnmG.